We begin with the raw amino-acid sequence, 1106 residues long: Carbamoyl phosphate synthase large chain (1106 aa).

The interval 1 to 402 (MPRREDIRSV…SFQKALRSLE (402 aa)) is carboxyphosphate synthetic domain. Residues Arg-129, Arg-169, Gly-175, Gly-176, Glu-208, Val-210, Glu-215, Gly-241, Val-242, His-243, Gln-285, and Glu-299 each contribute to the ATP site. The region spanning 133-328 (KKAMEKIGVR…IAKIAALLSI (196 aa)) is the ATP-grasp 1 domain. Residues Gln-285, Glu-299, and Asn-301 each contribute to the Mg(2+) site. Mn(2+) is bound by residues Gln-285, Glu-299, and Asn-301. The segment at 403–582 (IDRYGFGSDG…YSSYDEEDES (180 aa)) is oligomerization domain. Residues 583 to 964 (DVTNAKSVMI…AFLKSQYMAG (382 aa)) form a carbamoyl phosphate synthetic domain region. The 192-residue stretch at 707-898 (VEVLEKLKLN…IVKYATRIMM (192 aa)) folds into the ATP-grasp 2 domain. ATP contacts are provided by Arg-743, Ser-782, Leu-784, Glu-789, Gly-814, Ile-815, His-816, Ser-817, Gln-857, and Glu-869. Mg(2+) contacts are provided by Gln-857, Glu-869, and Asn-871. Gln-857, Glu-869, and Asn-871 together coordinate Mn(2+). The MGS-like domain occupies 965 to 1106 (DELPSQGTVF…QEIHAMPKIL (142 aa)). The tract at residues 965-1106 (DELPSQGTVF…QEIHAMPKIL (142 aa)) is allosteric domain.

The protein belongs to the CarB family. Composed of two chains; the small (or glutamine) chain promotes the hydrolysis of glutamine to ammonia, which is used by the large (or ammonia) chain to synthesize carbamoyl phosphate. Tetramer of heterodimers (alpha,beta)4. Requires Mg(2+) as cofactor. Mn(2+) serves as cofactor.

The catalysed reaction is hydrogencarbonate + L-glutamine + 2 ATP + H2O = carbamoyl phosphate + L-glutamate + 2 ADP + phosphate + 2 H(+). It carries out the reaction hydrogencarbonate + NH4(+) + 2 ATP = carbamoyl phosphate + 2 ADP + phosphate + 2 H(+). It functions in the pathway amino-acid biosynthesis; L-arginine biosynthesis; carbamoyl phosphate from bicarbonate: step 1/1. Its pathway is pyrimidine metabolism; UMP biosynthesis via de novo pathway; (S)-dihydroorotate from bicarbonate: step 1/3. Its function is as follows. Large subunit of the glutamine-dependent carbamoyl phosphate synthetase (CPSase). CPSase catalyzes the formation of carbamoyl phosphate from the ammonia moiety of glutamine, carbonate, and phosphate donated by ATP, constituting the first step of 2 biosynthetic pathways, one leading to arginine and/or urea and the other to pyrimidine nucleotides. The large subunit (synthetase) binds the substrates ammonia (free or transferred from glutamine from the small subunit), hydrogencarbonate and ATP and carries out an ATP-coupled ligase reaction, activating hydrogencarbonate by forming carboxy phosphate which reacts with ammonia to form carbamoyl phosphate. The sequence is that of Carbamoyl phosphate synthase large chain from Leptospira interrogans serogroup Icterohaemorrhagiae serovar copenhageni (strain Fiocruz L1-130).